We begin with the raw amino-acid sequence, 240 residues long: NKG2-E type II integral membrane protein (240 aa).

Polar residues predominate over residues 1 to 12; it reads MSKQRGTFSEVS. The disordered stretch occupies residues 1-31; that stretch reads MSKQRGTFSEVSLAQDPKWQQRKPKGNKSSI. The Cytoplasmic portion of the chain corresponds to 1-70; that stretch reads MSKQRGTFSE…CQGLLPPPEK (70 aa). A helical; Signal-anchor for type II membrane protein membrane pass occupies residues 71-93; sequence LTAEVLGIICIVLMATVLKTIVL. The Extracellular portion of the chain corresponds to 94 to 240; that stretch reads IPFLEQNNSS…IMLTRLVLNS (147 aa). N100 carries an N-linked (GlcNAc...) asparagine glycan. Positions 116 to 230 constitute a C-type lectin domain; sequence HCPEEWITYS…GSSRIIRRGF (115 aa). The cysteines at positions 117 and 128 are disulfide-linked. N-linked (GlcNAc...) asparagine glycans are attached at residues N149 and N179. C207 and C220 are oxidised to a cystine.

As to quaternary structure, can form disulfide-bonded heterodimer with CD94. As to expression, natural killer cells.

It localises to the membrane. In terms of biological role, plays a role as a receptor for the recognition of MHC class I HLA-E molecules by NK cells and some cytotoxic T-cells. The polypeptide is NKG2-E type II integral membrane protein (KLRC3) (Homo sapiens (Human)).